The primary structure comprises 644 residues: Pentatricopeptide repeat-containing protein At1g12775, mitochondrial (644 aa).

A mitochondrion-targeting transit peptide spans 1-53 (MVRMMIRRLSSQASRFVQPRLLETGTLRIALINCPNELLFCCERGFSTFSDRN). PPR repeat units follow at residues 87–121 (TVID…GIAH), 122–156 (SIYT…GYEP), 157–191 (DTVI…GHKP), 192–226 (TLIT…GFQP), 227–261 (NEVT…NIKL), 262–296 (DAVK…GFKA), 297–331 (DIIT…KISP), 332–366 (NVVT…GIAP), 367–401 (NTIT…GCDP), 402–436 (DIMT…GVIA), 437–471 (NTVT…RVRP), 472–506 (DIVS…KMEL), 507–541 (DIGI…GVKL), 542–576 (DARA…GHAP), and 577–611 (DELT…GFPA).

The protein belongs to the PPR family. P subfamily.

It is found in the mitochondrion. In Arabidopsis thaliana (Mouse-ear cress), this protein is Pentatricopeptide repeat-containing protein At1g12775, mitochondrial.